Here is a 547-residue protein sequence, read N- to C-terminus: Nuclear speckle splicing regulatory protein 1 (547 aa).

Positions 25–51 are disordered; that stretch reads KPSVFGNDSDDDEASVSESLQREAAKK. Residues Ser-27 and Ser-33 each carry the phosphoserine modification. The stretch at 103–177 forms a coiled coil; that stretch reads IHNLLKAVEI…EARLDVTKQK (75 aa). The segment at 105–169 is necessary for alternative splicing activity; that stretch reads NLLKAVEIRK…REKRAAALEA (65 aa). The segment at 188–523 is disordered; that stretch reads NQAVGEEAVP…KRSNEETVMS (336 aa). Residues Lys-198 and Lys-209 each participate in a glycyl lysine isopeptide (Lys-Gly) (interchain with G-Cter in SUMO2) cross-link. Residues 200–217 show a composition bias toward basic and acidic residues; the sequence is SFREARTVIKEEKLRGYP. The span at 223–232 shows a compositional bias: polar residues; the sequence is ENRPQQNCAL. Positions 237–254 are enriched in acidic residues; that stretch reads EEAEENPDADSDSEESCD. Phosphoserine is present on residues Ser-247 and Ser-252. Residues 255-269 show a composition bias toward basic and acidic residues; sequence DGERGDHKVKSRGEE. Position 276 is an N6-acetyllysine (Lys-276). Residues 277–287 show a composition bias toward basic residues; that stretch reads YLKHHKNHTHS. Lys-279 is covalently cross-linked (Glycyl lysine isopeptide (Lys-Gly) (interchain with G-Cter in SUMO2)). Residues 308 to 339 show a composition bias toward basic and acidic residues; it reads RGHEHKGGQHQDRQSRDQESCHKDRSHREEKS. A compositionally biased stretch (basic residues) spans 340 to 355; it reads SHRHREASHKDHHWKR. Composition is skewed to basic and acidic residues over residues 356-480 and 490-506; these read HEHE…KPPR and RLTEERPEKGSQPERPP. Positions 376-417 form a coiled coil; that stretch reads KREKYSSREQEKDRQWNDHDRYSEKEKKGKEKEEHRKARRER. Residue Ser-447 is modified to Phosphoserine.

The protein belongs to the NSRP1 family. Interacts (via C-terminus) with SRSF1. Interacts (via C-terminus) with SRSF2.

It is found in the nucleus. The protein localises to the nucleus speckle. Functionally, RNA-binding protein that mediates pre-mRNA alternative splicing regulation. In Rattus norvegicus (Rat), this protein is Nuclear speckle splicing regulatory protein 1 (Nsrp1).